An 860-amino-acid polypeptide reads, in one-letter code: Leucine--tRNA ligase (860 aa).

The 'HIGH' region signature appears at 42-52 (PYPSGRLHMGH). A 'KMSKS' region motif is present at residues 619 to 623 (KMSKS). Lys622 provides a ligand contact to ATP.

Belongs to the class-I aminoacyl-tRNA synthetase family.

The protein resides in the cytoplasm. The catalysed reaction is tRNA(Leu) + L-leucine + ATP = L-leucyl-tRNA(Leu) + AMP + diphosphate. The protein is Leucine--tRNA ligase of Yersinia pseudotuberculosis serotype I (strain IP32953).